Reading from the N-terminus, the 207-residue chain is Large ribosomal subunit protein bL25 (207 aa).

It belongs to the bacterial ribosomal protein bL25 family. CTC subfamily. As to quaternary structure, part of the 50S ribosomal subunit; part of the 5S rRNA/L5/L18/L25 subcomplex. Contacts the 5S rRNA. Binds to the 5S rRNA independently of L5 and L18.

This is one of the proteins that binds to the 5S RNA in the ribosome where it forms part of the central protuberance. The sequence is that of Large ribosomal subunit protein bL25 from Brucella canis (strain ATCC 23365 / NCTC 10854 / RM-666).